We begin with the raw amino-acid sequence, 260 residues long: Adenosylcobinamide-GDP ribazoletransferase (260 aa).

Helical transmembrane passes span 3–23 (APLW…LPAW), 36–56 (FAPW…LVLI), 60–80 (WPTS…SGGL), 108–128 (VGAS…ASLL), 133–153 (LAPL…LWAM), 180–200 (ALPA…LMIV), 206–226 (MVLM…PELL), and 239–259 (GASV…LLPA).

It belongs to the CobS family. The cofactor is Mg(2+).

It is found in the cell inner membrane. It catalyses the reaction alpha-ribazole + adenosylcob(III)inamide-GDP = adenosylcob(III)alamin + GMP + H(+). The enzyme catalyses alpha-ribazole 5'-phosphate + adenosylcob(III)inamide-GDP = adenosylcob(III)alamin 5'-phosphate + GMP + H(+). Its pathway is cofactor biosynthesis; adenosylcobalamin biosynthesis; adenosylcobalamin from cob(II)yrinate a,c-diamide: step 7/7. Joins adenosylcobinamide-GDP and alpha-ribazole to generate adenosylcobalamin (Ado-cobalamin). Also synthesizes adenosylcobalamin 5'-phosphate from adenosylcobinamide-GDP and alpha-ribazole 5'-phosphate. The protein is Adenosylcobinamide-GDP ribazoletransferase of Prochlorococcus marinus (strain MIT 9313).